Reading from the N-terminus, the 102-residue chain is Urease subunit beta (102 aa).

The protein belongs to the urease beta subunit family. In terms of assembly, heterotrimer of UreA (gamma), UreB (beta) and UreC (alpha) subunits. Three heterotrimers associate to form the active enzyme.

The protein localises to the cytoplasm. It carries out the reaction urea + 2 H2O + H(+) = hydrogencarbonate + 2 NH4(+). The protein operates within nitrogen metabolism; urea degradation; CO(2) and NH(3) from urea (urease route): step 1/1. The sequence is that of Urease subunit beta from Bordetella pertussis (strain Tohama I / ATCC BAA-589 / NCTC 13251).